A 259-amino-acid chain; its full sequence is Apolipoprotein A-I (259 aa).

Positions 1–18 (MKAAVLAVALVFLTGCQA) are cleaved as a signal peptide. 2 repeat units span residues 67-88 (LNLL…EQLG) and 89-110 (PVTQ…NEMN). Residues 67–259 (LNLLDNWDTL…IDEAKKKLNA (193 aa)) form a 10 X approximate tandem repeats region. Residue Met109 is modified to Methionine sulfoxide. The stretch at 111–121 (KDLENVKQKMQ) is one 3; half-length repeat. Repeat unit 4 spans residues 122-143 (PHLDEFQEKWNEEVEAYRQKLE). A 5; truncated repeat occupies 144 to 161 (PLGTELHKNAKEMQRHLK). The stretch at 162-183 (VVAEEFRDRMRVNADALRAKFG) is repeat 6. The stretch at 184–203 (LYSDQMRENLAQRLTEIKNH) is one 7; truncated repeat. Met189 bears the Methionine sulfoxide mark. Repeat 8 spans residues 204–225 (PTLIEYHTKASDHLKTLGEKAK). A 9; half-length repeat occupies 226–236 (PALDDLGQGLM). At Met236 the chain carries Methionine sulfoxide. Copy 10 of the repeat occupies 237-259 (PVLEAWKAKIMSMIDEAKKKLNA).

The protein belongs to the apolipoprotein A1/A4/E family. As to quaternary structure, homodimer. Interacts with APOA1BP and CLU. Component of a sperm activating protein complex (SPAP), consisting of APOA1, an immunoglobulin heavy chain, an immunoglobulin light chain and albumin. Interacts with NDRG1. Interacts with SCGB3A2. Interacts with NAXE and YJEFN3. In terms of processing, glycosylated. Post-translationally, palmitoylated. Phosphorylation sites are present in the extracellular medium. As to expression, major protein of plasma HDL, also found in chylomicrons.

The protein resides in the secreted. Functionally, participates in the reverse transport of cholesterol from tissues to the liver for excretion by promoting cholesterol efflux from tissues and by acting as a cofactor for the lecithin cholesterol acyltransferase (LCAT). As part of the SPAP complex, activates spermatozoa motility. This chain is Apolipoprotein A-I (Apoa1), found in Rattus norvegicus (Rat).